Reading from the N-terminus, the 308-residue chain is ADP-L-glycero-D-manno-heptose-6-epimerase (308 aa).

NADP(+) is bound by residues 10 to 11, 31 to 32, K38, K53, 75 to 79, and N92; these read MI, DN, and EGACS. Y139 acts as the Proton acceptor in catalysis. K143 serves as a coordination point for NADP(+). N168 contacts substrate. NADP(+)-binding residues include V169 and K177. K177 functions as the Proton acceptor in the catalytic mechanism. Residues S179, H186, 200–203, R208, and Y271 contribute to the substrate site; that span reads FAGS.

It belongs to the NAD(P)-dependent epimerase/dehydratase family. HldD subfamily. As to quaternary structure, homopentamer. NADP(+) serves as cofactor.

It carries out the reaction ADP-D-glycero-beta-D-manno-heptose = ADP-L-glycero-beta-D-manno-heptose. The protein operates within nucleotide-sugar biosynthesis; ADP-L-glycero-beta-D-manno-heptose biosynthesis; ADP-L-glycero-beta-D-manno-heptose from D-glycero-beta-D-manno-heptose 7-phosphate: step 4/4. Functionally, catalyzes the interconversion between ADP-D-glycero-beta-D-manno-heptose and ADP-L-glycero-beta-D-manno-heptose via an epimerization at carbon 6 of the heptose. The chain is ADP-L-glycero-D-manno-heptose-6-epimerase from Mannheimia succiniciproducens (strain KCTC 0769BP / MBEL55E).